Reading from the N-terminus, the 1063-residue chain is E3 ubiquitin-protein ligase PDZRN3 (1063 aa).

Residues 18 to 56 (CALCHKVLEDPLTTPCGHVFCAGCVLPWVVQEGSCPARC) form an RING-type; degenerate zinc finger. The segment at 100–158 (EHLERCDFAPARCRHAGCGQLLLRRDVEAHMRDACDARPVGRCQEGCGLPLTHGEQRAG) adopts a TRAF-type zinc-finger fold. PDZ domains are found at residues 249–339 (TLVL…LRRT) and 419–503 (EVGL…IARP). S427 is modified (phosphoserine). The disordered stretch occupies residues 545–602 (QKKHEEDGGTTDTATILSNQHEKDSGVGRTDESTRNDESSEQENNGEDATASANPLAG). The segment covering 554 to 563 (TTDTATILSN) has biased composition (polar residues). Basic and acidic residues predominate over residues 564–582 (QHEKDSGVGRTDESTRNDE). Positions 680–705 (ESVDKELELLNEELRSIELECLSIVR) form a coiled coil. The segment covering 746–755 (ELPEKSDKDS) has biased composition (basic and acidic residues). Disordered regions lie at residues 746–798 (ELPE…IEAY) and 834–853 (IKER…PKLG). Positions 756-770 (SSAYNTGESCRSTPL) are enriched in polar residues.

As to quaternary structure, interacts with NLGN1 and EFNB2. Interacts with UBE2D2 and with MUSK via the first PDZ domain. In myotubes, the interaction between PDZRN3 and MUSK is enhanced upon agrin stimulation. Post-translationally, auto-ubiquitinated. As to expression, highly expressed in skeletal and cardiac muscle and at lower levels in spinal cord and brain (at protein level). Also expressed in kidney and lung. In muscles, concentrated at the neuromuscular junction (NMJ).

It is found in the synapse. It localises to the cytoplasm. It carries out the reaction S-ubiquitinyl-[E2 ubiquitin-conjugating enzyme]-L-cysteine + [acceptor protein]-L-lysine = [E2 ubiquitin-conjugating enzyme]-L-cysteine + N(6)-ubiquitinyl-[acceptor protein]-L-lysine.. Its pathway is protein modification; protein ubiquitination. E3 ubiquitin-protein ligase. Plays an important role in regulating the surface level of MUSK on myotubes. Mediates the ubiquitination of MUSK, promoting its endocytosis and lysosomal degradation. Might contribute to terminal myogenic differentiation. This chain is E3 ubiquitin-protein ligase PDZRN3 (Pdzrn3), found in Mus musculus (Mouse).